Here is a 253-residue protein sequence, read N- to C-terminus: 2-C-methyl-D-erythritol 4-phosphate cytidylyltransferase (253 aa).

The segment at 1–28 (MSVSSRPGRRRFALIPSAGTGTRAGGDL) is disordered.

The protein belongs to the IspD/TarI cytidylyltransferase family. IspD subfamily.

The catalysed reaction is 2-C-methyl-D-erythritol 4-phosphate + CTP + H(+) = 4-CDP-2-C-methyl-D-erythritol + diphosphate. Its pathway is isoprenoid biosynthesis; isopentenyl diphosphate biosynthesis via DXP pathway; isopentenyl diphosphate from 1-deoxy-D-xylulose 5-phosphate: step 2/6. In terms of biological role, catalyzes the formation of 4-diphosphocytidyl-2-C-methyl-D-erythritol from CTP and 2-C-methyl-D-erythritol 4-phosphate (MEP). This chain is 2-C-methyl-D-erythritol 4-phosphate cytidylyltransferase, found in Ralstonia nicotianae (strain ATCC BAA-1114 / GMI1000) (Ralstonia solanacearum).